The sequence spans 909 residues: MRVGSRINDEEAMPLTAPESRARDSIDSSSTASISLTLVEGASHATTEPSKPAHNHNGRAQGNYAEKYRDDLEEDWEEDNYIPSNGKSNQRRTLIVFWLLVALCVGGWAVAFLFFVTSPGNKTSTSPHSGSNSPEGDVTKPGIPATGKKIPLDDAIGGVWSPAEHTISWITGAKGEDGLLLQKSEGGTGPYLHVEDVRNIHGTQSNNNSIVLMKESVFFVNDERISPEKVWPSPDLKTVLAMTREKKNWRHSFTGLYWLFDVETQTAQPLDPDAPNGRIQLATWSPTSDAVAFTRDNNLYIRNLTSKSVKAITTDGGTNLFYGIPDWVYEEEVFEGNCATWWSLDGKYISYLRTNETLVPEFPIDFYLSSPPGYSPKPNEESYPYVQQIKYPKAGAPNPTVNLQFYDVEREESFSVDVKDTLKDDDRLIVEVIPGSKGKVLVRETNRESYIVKVAVIDANKREGKIVRSDNIDEIDGGWVEPSHTTTYIPADPSAGRPDDGYIDTVIHEGYIHLAYFTPLENPKPKMLTTGKWEVVAAPSGVDLKNNVVYFVATKESPIDRHVYSVKLDGSELQMLKDSDKSAYYDVSFSHGAGYMLLKYQGPQIPWQKLISSPSNADNYIEILEENKKLAKLSNEFSLPSLHYSTINVDGFELPVVERRPPNFDETKKYPVLFQLYGGPGSQTVNKKFLVNFQTYVASSLGYIVVTVDGRGTGFNGRKFKCIVRRNLGHYESHDQIQAAKAWGKKPYVDKTRMAIWGWSYGGFMTLKTLEQDAGETFQYGMAVAPVTNWRYYDSVYTERYMHMPQNNEGGYENASISNATNLSQNTRFLIMHGSADDNVHFQNTLTLLDKLDILGVHNYDMHVFPDSNHGIYFHHAYKMVHQRKYFNLSFLGHGFFSFYSNFLPIRSF.

Residues methionine 1 to asparagine 63 form a disordered region. At methionine 1–leucine 94 the chain is on the cytoplasmic side. Residues aspartate 27–leucine 38 are compositionally biased toward low complexity. Residues isoleucine 95–phenylalanine 115 form a helical; Signal-anchor for type II membrane protein membrane-spanning segment. Residues valine 116–phenylalanine 909 are Vacuolar-facing. N-linked (GlcNAc...) asparagine glycosylation occurs at asparagine 121. A compositionally biased stretch (polar residues) spans threonine 123 to proline 134. The segment at threonine 123–proline 144 is disordered. N-linked (GlcNAc...) asparagine glycans are attached at residues asparagine 207, asparagine 303, and asparagine 355. Serine 760 (charge relay system) is an active-site residue. N-linked (GlcNAc...) asparagine glycosylation is found at asparagine 814, asparagine 819, and asparagine 822. Catalysis depends on charge relay system residues aspartate 837 and histidine 870. A glycan (N-linked (GlcNAc...) asparagine) is linked at asparagine 888.

The protein belongs to the peptidase S9B family.

It is found in the vacuole membrane. The catalysed reaction is Release of an N-terminal dipeptide, Xaa-Yaa-|-Zaa-, from a polypeptide, preferentially when Yaa is Pro, provided Zaa is neither Pro nor hydroxyproline.. Functionally, type IV dipeptidyl-peptidase which removes N-terminal dipeptides sequentially from polypeptides having unsubstituted N-termini provided that the penultimate residue is proline. The chain is Probable dipeptidyl-aminopeptidase B (DAPB) from Arthroderma benhamiae (strain ATCC MYA-4681 / CBS 112371) (Trichophyton mentagrophytes).